Reading from the N-terminus, the 207-residue chain is dTTP/UTP pyrophosphatase (207 aa).

D87 acts as the Proton acceptor in catalysis.

Belongs to the Maf family. YhdE subfamily. The cofactor is a divalent metal cation.

It is found in the cytoplasm. The catalysed reaction is dTTP + H2O = dTMP + diphosphate + H(+). It carries out the reaction UTP + H2O = UMP + diphosphate + H(+). In terms of biological role, nucleoside triphosphate pyrophosphatase that hydrolyzes dTTP and UTP. May have a dual role in cell division arrest and in preventing the incorporation of modified nucleotides into cellular nucleic acids. This is dTTP/UTP pyrophosphatase from Bordetella pertussis (strain Tohama I / ATCC BAA-589 / NCTC 13251).